Reading from the N-terminus, the 242-residue chain is Myogenic factor 6 (242 aa).

The segment at 31-63 (SPLYPGSDGTLSPCQDQMPQEAGSDSSGEEHVL) is disordered. Polar residues predominate over residues 39–56 (GTLSPCQDQMPQEAGSDS). The bHLH domain occupies 93 to 144 (DRRKAATLRERRRLKKINEAFEALKRRTVANPNQRLPKVEILRSAISYIERL).

As to quaternary structure, efficient DNA binding requires dimerization with another bHLH protein. Interacts with CSRP3. In terms of tissue distribution, skeletal muscle.

The protein localises to the nucleus. Involved in muscle differentiation (myogenic factor). Induces fibroblasts to differentiate into myoblasts. Probable sequence specific DNA-binding protein. This is Myogenic factor 6 (Myf6) from Mus musculus (Mouse).